The chain runs to 385 residues: Spermidine/putrescine import ATP-binding protein PotA (385 aa).

Residues 27 to 257 enclose the ABC transporter domain; the sequence is ASFRAVSKHY…PANLFVAQFA (231 aa). 59 to 66 is an ATP binding site; it reads GPSGCGKT.

This sequence belongs to the ABC transporter superfamily. Spermidine/putrescine importer (TC 3.A.1.11.1) family. In terms of assembly, the complex is composed of two ATP-binding proteins (PotA), two transmembrane proteins (PotB and PotC) and a solute-binding protein (PotD).

It localises to the cell inner membrane. It carries out the reaction ATP + H2O + polyamine-[polyamine-binding protein]Side 1 = ADP + phosphate + polyamineSide 2 + [polyamine-binding protein]Side 1.. Its function is as follows. Part of the ABC transporter complex PotABCD involved in spermidine/putrescine import. Responsible for energy coupling to the transport system. The polypeptide is Spermidine/putrescine import ATP-binding protein PotA (Methylococcus capsulatus (strain ATCC 33009 / NCIMB 11132 / Bath)).